Reading from the N-terminus, the 353-residue chain is Stachydrine N-demethylase reductase subunit Stc4 (353 aa).

One can recognise an FAD-binding FR-type domain in the interval 11-114 (SDAEPLECVT…IGPAGKFSIV (104 aa)). One can recognise a 2Fe-2S ferredoxin-type domain in the interval 269-353 (AEIAFALSGV…KPLRRVSVEA (85 aa)). 4 residues coordinate [2Fe-2S] cluster: C303, C308, C311, and C341.

The protein in the N-terminal section; belongs to the FAD-binding oxidoreductase type 6 family. In terms of assembly, the system is probably composed of an oxygenase subunit (Stc2) and two reductase subunits (Stc3 and Stc4). Requires FAD as cofactor. The cofactor is [2Fe-2S] cluster.

In terms of biological role, reductase involved in the catabolism of stachydrine (L-proline betaine), a source of carbon and nitrogen. Part of a Rieske-type oxygenase system that catalyzes the demethylation of stachydrine to produce N-methyl-L-proline (monomethylproline). This subunit is probably involved in the transfer of electrons from NAD(P)H to the catalytic subunit Stc2. This is Stachydrine N-demethylase reductase subunit Stc4 from Rhizobium meliloti (strain 1021) (Ensifer meliloti).